A 197-amino-acid chain; its full sequence is Phosphoheptose isomerase (197 aa).

Positions 37–197 constitute an SIS domain; the sequence is MLQCLMNDGK…CIDSVLLEGM (161 aa). A substrate-binding site is contributed by 52-54; the sequence is NGG. Zn(2+)-binding residues include His-61 and Glu-65. Substrate-binding positions include Glu-65, 94–95, 120–122, Ser-125, and Gln-175; these read ND and STS. Zn(2+) is bound by residues Gln-175 and His-183.

It belongs to the SIS family. GmhA subfamily. In terms of assembly, homotetramer. Zn(2+) serves as cofactor.

It localises to the cytoplasm. The catalysed reaction is 2 D-sedoheptulose 7-phosphate = D-glycero-alpha-D-manno-heptose 7-phosphate + D-glycero-beta-D-manno-heptose 7-phosphate. It functions in the pathway carbohydrate biosynthesis; D-glycero-D-manno-heptose 7-phosphate biosynthesis; D-glycero-alpha-D-manno-heptose 7-phosphate and D-glycero-beta-D-manno-heptose 7-phosphate from sedoheptulose 7-phosphate: step 1/1. Functionally, catalyzes the isomerization of sedoheptulose 7-phosphate in D-glycero-D-manno-heptose 7-phosphate. The chain is Phosphoheptose isomerase from Neisseria gonorrhoeae (strain ATCC 700825 / FA 1090).